Reading from the N-terminus, the 122-residue chain is Small ribosomal subunit protein uS13 (122 aa).

Positions 93-122 (RRGLPVRGQRTKTNARTRKGPKKTIAGKKK) are disordered.

It belongs to the universal ribosomal protein uS13 family. In terms of assembly, part of the 30S ribosomal subunit. Forms a loose heterodimer with protein S19. Forms two bridges to the 50S subunit in the 70S ribosome.

Located at the top of the head of the 30S subunit, it contacts several helices of the 16S rRNA. In the 70S ribosome it contacts the 23S rRNA (bridge B1a) and protein L5 of the 50S subunit (bridge B1b), connecting the 2 subunits; these bridges are implicated in subunit movement. Contacts the tRNAs in the A and P-sites. This chain is Small ribosomal subunit protein uS13, found in Corynebacterium urealyticum (strain ATCC 43042 / DSM 7109).